Here is a 668-residue protein sequence, read N- to C-terminus: DNA ligase (668 aa).

Residues 32 to 36, 81 to 82, and Glu-111 contribute to the NAD(+) site; these read DAEYD and SL. Lys-113 (N6-AMP-lysine intermediate) is an active-site residue. NAD(+) is bound by residues Arg-134, Glu-171, Lys-290, and Lys-314. Positions 408, 411, 426, and 432 each coordinate Zn(2+). The region spanning 591–668 is the BRCT domain; sequence EEDLSLKGQT…DEEALIAILS (78 aa).

The protein belongs to the NAD-dependent DNA ligase family. LigA subfamily. Mg(2+) is required as a cofactor. It depends on Mn(2+) as a cofactor.

It catalyses the reaction NAD(+) + (deoxyribonucleotide)n-3'-hydroxyl + 5'-phospho-(deoxyribonucleotide)m = (deoxyribonucleotide)n+m + AMP + beta-nicotinamide D-nucleotide.. DNA ligase that catalyzes the formation of phosphodiester linkages between 5'-phosphoryl and 3'-hydroxyl groups in double-stranded DNA using NAD as a coenzyme and as the energy source for the reaction. It is essential for DNA replication and repair of damaged DNA. This chain is DNA ligase, found in Shewanella pealeana (strain ATCC 700345 / ANG-SQ1).